The chain runs to 425 residues: Imidazolonepropionase (425 aa).

Fe(3+) contacts are provided by His-82 and His-84. Residues His-82 and His-84 each contribute to the Zn(2+) site. Residues Arg-91, Tyr-154, and His-187 each coordinate 4-imidazolone-5-propanoate. Tyr-154 contributes to the N-formimidoyl-L-glutamate binding site. His-253 provides a ligand contact to Fe(3+). His-253 serves as a coordination point for Zn(2+). Glu-256 contributes to the 4-imidazolone-5-propanoate binding site. Position 328 (Asp-328) interacts with Fe(3+). Asp-328 serves as a coordination point for Zn(2+). Asn-330 and Gly-332 together coordinate N-formimidoyl-L-glutamate. Ser-333 contacts 4-imidazolone-5-propanoate.

The protein belongs to the metallo-dependent hydrolases superfamily. HutI family. Zn(2+) serves as cofactor. Requires Fe(3+) as cofactor.

The protein resides in the cytoplasm. It carries out the reaction 4-imidazolone-5-propanoate + H2O = N-formimidoyl-L-glutamate. The protein operates within amino-acid degradation; L-histidine degradation into L-glutamate; N-formimidoyl-L-glutamate from L-histidine: step 3/3. In terms of biological role, catalyzes the hydrolytic cleavage of the carbon-nitrogen bond in imidazolone-5-propanoate to yield N-formimidoyl-L-glutamate. It is the third step in the universal histidine degradation pathway. This is Imidazolonepropionase from Symbiobacterium thermophilum (strain DSM 24528 / JCM 14929 / IAM 14863 / T).